A 479-amino-acid chain; its full sequence is Ribosomal RNA small subunit methyltransferase F (479 aa).

S-adenosyl-L-methionine is bound by residues 125 to 131, Glu-149, Asp-176, and Asp-194; that span reads AAAPGSK. Cys-247 serves as the catalytic Nucleophile.

This sequence belongs to the class I-like SAM-binding methyltransferase superfamily. RsmB/NOP family.

Its subcellular location is the cytoplasm. The enzyme catalyses cytidine(1407) in 16S rRNA + S-adenosyl-L-methionine = 5-methylcytidine(1407) in 16S rRNA + S-adenosyl-L-homocysteine + H(+). Functionally, specifically methylates the cytosine at position 1407 (m5C1407) of 16S rRNA. This is Ribosomal RNA small subunit methyltransferase F from Escherichia coli O6:H1 (strain CFT073 / ATCC 700928 / UPEC).